Here is a 291-residue protein sequence, read N- to C-terminus: Glycine--tRNA ligase alpha subunit (291 aa).

This sequence belongs to the class-II aminoacyl-tRNA synthetase family. In terms of assembly, tetramer of two alpha and two beta subunits.

It localises to the cytoplasm. The enzyme catalyses tRNA(Gly) + glycine + ATP = glycyl-tRNA(Gly) + AMP + diphosphate. In Coprothermobacter proteolyticus (strain ATCC 35245 / DSM 5265 / OCM 4 / BT), this protein is Glycine--tRNA ligase alpha subunit.